The sequence spans 183 residues: Putative 3-methyladenine DNA glycosylase (183 aa).

This sequence belongs to the DNA glycosylase MPG family.

The protein is Putative 3-methyladenine DNA glycosylase of Legionella pneumophila (strain Corby).